The following is a 205-amino-acid chain: Endoplasmic reticulum membrane protein complex subunit 10 (205 aa).

The first 17 residues, 1–17 (MLVRLLRVILLASMVFC), serve as a signal peptide directing secretion. The Lumenal segment spans residues 18–172 (ADILQLSYSD…VKEVSWFQKN (155 aa)). The N-linked (GlcNAc...) asparagine glycan is linked to Asn47. The helical transmembrane segment at 173–190 (WKMLLLGLLIYNFVAGSA) threads the bilayer. Residues 191 to 205 (KKQQQGGAGADQKTE) lie on the Cytoplasmic side of the membrane.

As to quaternary structure, component of the ER membrane protein complex (EMC).

Its subcellular location is the endoplasmic reticulum membrane. In terms of biological role, part of the endoplasmic reticulum membrane protein complex (EMC) that enables the energy-independent insertion into endoplasmic reticulum membranes of newly synthesized membrane proteins. Preferentially accommodates proteins with transmembrane domains that are weakly hydrophobic or contain destabilizing features such as charged and aromatic residues. Involved in the cotranslational insertion of multi-pass membrane proteins in which stop-transfer membrane-anchor sequences become ER membrane spanning helices. It is also required for the post-translational insertion of tail-anchored/TA proteins in endoplasmic reticulum membranes. By mediating the proper cotranslational insertion of N-terminal transmembrane domains in an N-exo topology, with translocated N-terminus in the lumen of the ER, controls the topology of multi-pass membrane proteins. The sequence is that of Endoplasmic reticulum membrane protein complex subunit 10 from Saccharomyces cerevisiae (strain ATCC 204508 / S288c) (Baker's yeast).